A 118-amino-acid chain; its full sequence is MRTTKGAARRQSKKRLFKRAKGFRGGRGNLTRTVKETLLRSGAFAFRDRRVRKREFRKLWIIRINAAVKQHGLRYSEFIHGLNKAGIQLDRKSLSEMAIHDAAGFKQVCDKVKETLAA.

This sequence belongs to the bacterial ribosomal protein bL20 family.

In terms of biological role, binds directly to 23S ribosomal RNA and is necessary for the in vitro assembly process of the 50S ribosomal subunit. It is not involved in the protein synthesizing functions of that subunit. The protein is Large ribosomal subunit protein bL20 of Rhodopirellula baltica (strain DSM 10527 / NCIMB 13988 / SH1).